A 209-amino-acid polypeptide reads, in one-letter code: MKSLSYKRIYKSQEYLATLGTIEYRSLFGSYSLTVDDTVFAMVSDGELYLRACEQSAQYCVKHPPVWLTYKKCGRSVTLNYYRVDESLWRNQLKLVRLSKYSLDAALKEKSTRNTRERLKDLPNMSFHLEAILGEVGIKDVRALRILGAKMCWLRLRQQNSLVTEKILFMLEGAIIGIHEAALPVARRQELAEWADSLTPKQEFPAELE.

Belongs to the Sxy/TfoX family.

Its function is as follows. Induces low levels of natural DNA uptake by inducing transcription of the competence genes (the CRP-S regulon) required for DNA transformation. Induction of the CRP-S regulon also requires Sxy-activated promoter (CRP-S), cAMP receptor protein (CRP) and cAMP. Induces CRP-S site-containing genes which are involved in genome maintenance and transcription or encoding transposases and toxin-antitoxin pairs. The chain is Protein Sxy from Escherichia coli (strain K12).